We begin with the raw amino-acid sequence, 153 residues long: Ribosomal RNA large subunit methyltransferase H (153 aa).

S-adenosyl-L-methionine contacts are provided by Leu-71 and Gly-102.

It belongs to the RNA methyltransferase RlmH family. Homodimer.

Its subcellular location is the cytoplasm. The catalysed reaction is pseudouridine(1915) in 23S rRNA + S-adenosyl-L-methionine = N(3)-methylpseudouridine(1915) in 23S rRNA + S-adenosyl-L-homocysteine + H(+). Its function is as follows. Specifically methylates the pseudouridine at position 1915 (m3Psi1915) in 23S rRNA. This chain is Ribosomal RNA large subunit methyltransferase H, found in Anaeromyxobacter dehalogenans (strain 2CP-1 / ATCC BAA-258).